Consider the following 296-residue polypeptide: Ribosomal protein L11 methyltransferase (296 aa).

Residues threonine 147, glycine 168, aspartate 190, and asparagine 232 each contribute to the S-adenosyl-L-methionine site.

The protein belongs to the methyltransferase superfamily. PrmA family.

The protein resides in the cytoplasm. The enzyme catalyses L-lysyl-[protein] + 3 S-adenosyl-L-methionine = N(6),N(6),N(6)-trimethyl-L-lysyl-[protein] + 3 S-adenosyl-L-homocysteine + 3 H(+). Methylates ribosomal protein L11. The sequence is that of Ribosomal protein L11 methyltransferase from Marinomonas sp. (strain MWYL1).